Consider the following 311-residue polypeptide: Delta(1)-pyrroline-2-carboxylate reductase 2 (311 aa).

This sequence belongs to the ornithine cyclodeaminase/mu-crystallin family.

The catalysed reaction is L-proline + NAD(+) = 1-pyrroline-2-carboxylate + NADH + H(+). The enzyme catalyses L-proline + NADP(+) = 1-pyrroline-2-carboxylate + NADPH + H(+). Its function is as follows. Catalyzes the reduction of Delta(1)-pyrroline-2-carboxylate (Pyr2C) to L-proline, using preferentially NADPH over NADH as the electron donor. May be involved in a degradation pathway that converts trans-3-hydroxy-L-proline (t3LHyp) to L-proline. This chain is Delta(1)-pyrroline-2-carboxylate reductase 2, found in Burkholderia ambifaria (strain ATCC BAA-244 / DSM 16087 / CCUG 44356 / LMG 19182 / AMMD) (Burkholderia cepacia (strain AMMD)).